A 678-amino-acid chain; its full sequence is DNA ligase (678 aa).

Residues 47–51, 96–97, and Glu122 each bind NAD(+); these read DSDYD and SL. Lys124 serves as the catalytic N6-AMP-lysine intermediate. Residues Arg145, Glu182, Lys300, and Lys324 each contribute to the NAD(+) site. Residues Cys418, Cys421, Cys436, and Cys442 each coordinate Zn(2+). Residues 602 to 678 form the BRCT domain; that stretch reads AYNESFTGKT…ILEDNLKDLL (77 aa).

This sequence belongs to the NAD-dependent DNA ligase family. LigA subfamily. Mg(2+) is required as a cofactor. Requires Mn(2+) as cofactor.

The catalysed reaction is NAD(+) + (deoxyribonucleotide)n-3'-hydroxyl + 5'-phospho-(deoxyribonucleotide)m = (deoxyribonucleotide)n+m + AMP + beta-nicotinamide D-nucleotide.. DNA ligase that catalyzes the formation of phosphodiester linkages between 5'-phosphoryl and 3'-hydroxyl groups in double-stranded DNA using NAD as a coenzyme and as the energy source for the reaction. It is essential for DNA replication and repair of damaged DNA. This chain is DNA ligase, found in Francisella tularensis subsp. holarctica (strain OSU18).